The following is a 100-amino-acid chain: Aspartyl/glutamyl-tRNA(Asn/Gln) amidotransferase subunit C (100 aa).

The protein belongs to the GatC family. As to quaternary structure, heterotrimer of A, B and C subunits.

The catalysed reaction is L-glutamyl-tRNA(Gln) + L-glutamine + ATP + H2O = L-glutaminyl-tRNA(Gln) + L-glutamate + ADP + phosphate + H(+). It catalyses the reaction L-aspartyl-tRNA(Asn) + L-glutamine + ATP + H2O = L-asparaginyl-tRNA(Asn) + L-glutamate + ADP + phosphate + 2 H(+). Its function is as follows. Allows the formation of correctly charged Asn-tRNA(Asn) or Gln-tRNA(Gln) through the transamidation of misacylated Asp-tRNA(Asn) or Glu-tRNA(Gln) in organisms which lack either or both of asparaginyl-tRNA or glutaminyl-tRNA synthetases. The reaction takes place in the presence of glutamine and ATP through an activated phospho-Asp-tRNA(Asn) or phospho-Glu-tRNA(Gln). This Streptococcus mutans serotype c (strain ATCC 700610 / UA159) protein is Aspartyl/glutamyl-tRNA(Asn/Gln) amidotransferase subunit C.